We begin with the raw amino-acid sequence, 336 residues long: Inositol 2-dehydrogenase (336 aa).

This sequence belongs to the Gfo/Idh/MocA family. As to quaternary structure, homotetramer.

The catalysed reaction is myo-inositol + NAD(+) = scyllo-inosose + NADH + H(+). Its function is as follows. Involved in the oxidation of myo-inositol (MI) to 2-keto-myo-inositol (2KMI or 2-inosose). The protein is Inositol 2-dehydrogenase of Agrobacterium fabrum (strain C58 / ATCC 33970) (Agrobacterium tumefaciens (strain C58)).